The chain runs to 737 residues: O-GlcNAcase BT_4395 (737 aa).

Positions 1 to 21 (MKNNKIYLLGACLLCAVTTFA) are cleaved as a signal peptide. The interval 148–433 (VRYRGVVEGF…WKDAIRTILP (286 aa)) is catalytic domain. A GH84 domain is found at 149 to 416 (RYRGVVEGFY…SVASYAWNPA (268 aa)). Positions 156, 187, and 263 each coordinate a protein. Asp264 acts as the Proton donor in catalysis. Residues Tyr303, 358-360 (WWN), Asp365, and Asn393 contribute to the a protein site.

The protein belongs to the glycosyl hydrolase 84 family. Homodimer.

The enzyme catalyses 3-O-(N-acetyl-beta-D-glucosaminyl)-L-seryl-[protein] + H2O = N-acetyl-D-glucosamine + L-seryl-[protein]. It catalyses the reaction 3-O-(N-acetyl-beta-D-glucosaminyl)-L-threonyl-[protein] + H2O = L-threonyl-[protein] + N-acetyl-D-glucosamine. Its activity is regulated as follows. Inhibited by 1,2-dideoxy-2'-methyl-alpha-D-glucopyranoso-[2,1-d]-delta 2'-thiazoline (NAG-thiazoline) and O-(2-acetamido-2-deoxy-D-glucopyranosylidene)amino-N-phenyl-carbamate (PUGNAc). Not inhibited by Streptozotocin. Functionally, can hydrolyze the glycosidic link of O-GlcNAcylated proteins. Can use p-nitrophenyl-beta-GlcNAc and 4-methylumbelliferone-GlcNAc as substrates (in vitro). This is O-GlcNAcase BT_4395 from Bacteroides thetaiotaomicron (strain ATCC 29148 / DSM 2079 / JCM 5827 / CCUG 10774 / NCTC 10582 / VPI-5482 / E50).